The primary structure comprises 152 residues: MKHPFPQFPPILVIYCFCMLQIPSSGASPPLAGPPDGLDAVDPERLAHFLNQRETCSNQPKESRDVYKRFLFHYSRAWKSTHPVNSEFAPVHPLMRLAAKLPSRRMKRLPRLLHTDSRMATIDFPKKDPTTSLGRPFFLFRPRNGRYTDKVQ.

A signal peptide spans 1-26 (MKHPFPQFPPILVIYCFCMLQIPSSG). Propeptides lie at residues 27-69 (ASPP…VYKR), 70-105 (FLFHYSRAWKSTHPVNSEFAPVHPLMRLAAKLPSRR), and 106-108 (MKR). N144 carries the asparagine amide modification. Positions 147 to 152 (YTDKVQ) are excised as a propeptide.

The protein belongs to the NmU family. As to expression, expressed in the CNS, spleen and testis. Specifically expressed in the suprachiasmatic nuclei (SCN) of the hypothalamus.

The protein resides in the secreted. In terms of biological role, implicated in the regulation of circadian rhythms through autocrine and/or paracrine actions. Stimulates the contraction of rectum and elevation of blood pressure. The sequence is that of Neuromedin-S (Nms) from Rattus norvegicus (Rat).